The sequence spans 947 residues: Bifunctional glutamine synthetase adenylyltransferase/adenylyl-removing enzyme (947 aa).

The tract at residues 1–440 (MTPLSSPLSQ…VFNELIGDDE (440 aa)) is adenylyl removase. Positions 450 to 947 (SEPWREVWQD…ASWRKWLVAV (498 aa)) are adenylyl transferase.

It belongs to the GlnE family. It depends on Mg(2+) as a cofactor.

The enzyme catalyses [glutamine synthetase]-O(4)-(5'-adenylyl)-L-tyrosine + phosphate = [glutamine synthetase]-L-tyrosine + ADP. The catalysed reaction is [glutamine synthetase]-L-tyrosine + ATP = [glutamine synthetase]-O(4)-(5'-adenylyl)-L-tyrosine + diphosphate. Involved in the regulation of glutamine synthetase GlnA, a key enzyme in the process to assimilate ammonia. When cellular nitrogen levels are high, the C-terminal adenylyl transferase (AT) inactivates GlnA by covalent transfer of an adenylyl group from ATP to specific tyrosine residue of GlnA, thus reducing its activity. Conversely, when nitrogen levels are low, the N-terminal adenylyl removase (AR) activates GlnA by removing the adenylyl group by phosphorolysis, increasing its activity. The regulatory region of GlnE binds the signal transduction protein PII (GlnB) which indicates the nitrogen status of the cell. The protein is Bifunctional glutamine synthetase adenylyltransferase/adenylyl-removing enzyme of Salmonella paratyphi C (strain RKS4594).